The chain runs to 194 residues: Small ribosomal subunit protein uS4 (194 aa).

Lysine 66 carries the post-translational modification N6-acetyllysine. Lysine 93 is covalently cross-linked (Glycyl lysine isopeptide (Lys-Gly) (interchain with G-Cter in SUMO2)). In terms of domain architecture, S4 RNA-binding spans 108–182; that stretch reads RRLQTQVFKL…VKRKNAKKGQ (75 aa). N6-acetyllysine is present on lysine 116. Lysine 139 participates in a covalent cross-link: Glycyl lysine isopeptide (Lys-Gly) (interchain with G-Cter in SUMO2). Residue serine 153 is modified to Phosphoserine. Lysine 155 carries the post-translational modification N6-acetyllysine. Residues 162 to 194 form a disordered region; the sequence is RSPYGGGRPGRVKRKNAKKGQGGAGAGDDEEED. Serine 163 bears the Phosphoserine mark.

This sequence belongs to the universal ribosomal protein uS4 family. As to quaternary structure, component of the small ribosomal subunit. Part of the small subunit (SSU) processome, composed of more than 70 proteins and the RNA chaperone small nucleolar RNA (snoRNA) U3.

It is found in the cytoplasm. It localises to the nucleus. Its subcellular location is the nucleolus. Functionally, component of the small ribosomal subunit. The ribosome is a large ribonucleoprotein complex responsible for the synthesis of proteins in the cell. Part of the small subunit (SSU) processome, first precursor of the small eukaryotic ribosomal subunit. During the assembly of the SSU processome in the nucleolus, many ribosome biogenesis factors, an RNA chaperone and ribosomal proteins associate with the nascent pre-rRNA and work in concert to generate RNA folding, modifications, rearrangements and cleavage as well as targeted degradation of pre-ribosomal RNA by the RNA exosome. The polypeptide is Small ribosomal subunit protein uS4 (RPS9) (Papio anubis (Olive baboon)).